A 1066-amino-acid polypeptide reads, in one-letter code: Ribosomal protein S6 kinase delta-1 (1066 aa).

The PX domain maps to 8–132 (SADLARFYTV…DFFKGGIIND (125 aa)). The disordered stretch occupies residues 207 to 228 (VASDSEQSKTEEERESRSLFPG). Over residues 212–223 (EQSKTEEERESR) the composition is skewed to basic and acidic residues. The region spanning 277 to 305 (VQGESSPTRREAVKRRTAEYLMRAESISS) is the MIT domain. S282, S423, S427, S449, and S455 each carry phosphoserine. One can recognise a Protein kinase 1 domain in the interval 344 to 445 (GVIDKVLLVM…PTLAKVHLQQ (102 aa)). The disordered stretch occupies residues 441 to 509 (VHLQQPTSSP…SGSSSEEECT (69 aa)). The span at 448–458 (SSPQDSSSFES) shows a compositional bias: low complexity. The span at 474–483 (SSLTPSSQDD) shows a compositional bias: polar residues. The span at 492 to 503 (DSSPKWPDSGSS) shows a compositional bias: low complexity. Residues S494, S528, S583, S605, S608, S640, S661, S664, S667, and S794 each carry the phosphoserine modification. The tract at residues 553–596 (HLAADSDSPSTQLRAHELKFFPNDDPEAVSSPRTSDSLSRSKNS) is disordered. Positions 582-593 (SSPRTSDSLSRS) are enriched in low complexity. Residues 794–1056 (SSDPKFQGLG…VEDIKSHPFF (263 aa)) form the Protein kinase 2 domain. Residues 801-809 (GLGVVESAV) and R820 each bind ATP. Position 872 is a phosphoserine (S872). D929 serves as the catalytic Proton acceptor.

Belongs to the protein kinase superfamily. Ser/Thr protein kinase family. S6 kinase subfamily. As to quaternary structure, interacts with SPHK1 and phosphatidylinositol 3-phosphate. Interacts (via PX domain) with PRDX3. Highly expressed in testis, skeletal muscle, brain, heart, placenta, kidney and liver and weakly expressed in thymus, small intestine, lung and colon.

It localises to the cytoplasm. The protein resides in the membrane. It is found in the early endosome. The enzyme catalyses L-seryl-[protein] + ATP = O-phospho-L-seryl-[protein] + ADP + H(+). It carries out the reaction L-threonyl-[protein] + ATP = O-phospho-L-threonyl-[protein] + ADP + H(+). In terms of biological role, may be involved in transmitting sphingosine-1 phosphate (SPP)-mediated signaling into the cell. Plays a role in the recruitment of PRDX3 to early endosomes. This Homo sapiens (Human) protein is Ribosomal protein S6 kinase delta-1 (RPS6KC1).